Reading from the N-terminus, the 273-residue chain is 3-methyl-2-oxobutanoate hydroxymethyltransferase 3 (273 aa).

Residues aspartate 49 and aspartate 88 each coordinate Mg(2+). 3-methyl-2-oxobutanoate-binding positions include 49-50 (DS), aspartate 88, and lysine 118. Residue glutamate 120 participates in Mg(2+) binding. Glutamate 187 functions as the Proton acceptor in the catalytic mechanism.

Belongs to the PanB family. As to quaternary structure, homodecamer; pentamer of dimers. Mg(2+) serves as cofactor.

It is found in the cytoplasm. It carries out the reaction 3-methyl-2-oxobutanoate + (6R)-5,10-methylene-5,6,7,8-tetrahydrofolate + H2O = 2-dehydropantoate + (6S)-5,6,7,8-tetrahydrofolate. It participates in cofactor biosynthesis; (R)-pantothenate biosynthesis; (R)-pantoate from 3-methyl-2-oxobutanoate: step 1/2. Catalyzes the reversible reaction in which hydroxymethyl group from 5,10-methylenetetrahydrofolate is transferred onto alpha-ketoisovalerate to form ketopantoate. The chain is 3-methyl-2-oxobutanoate hydroxymethyltransferase 3 from Bradyrhizobium diazoefficiens (strain JCM 10833 / BCRC 13528 / IAM 13628 / NBRC 14792 / USDA 110).